A 485-amino-acid chain; its full sequence is Cysteine--tRNA ligase (485 aa).

Cysteine 27 is a Zn(2+) binding site. The 'HIGH' region signature appears at 29–39 (ITAYDLCHIGH). Cysteine 208, histidine 233, and glutamate 237 together coordinate Zn(2+). Positions 265-269 (KMSKS) match the 'KMSKS' region motif. Lysine 268 contributes to the ATP binding site.

This sequence belongs to the class-I aminoacyl-tRNA synthetase family. In terms of assembly, monomer. It depends on Zn(2+) as a cofactor.

It localises to the cytoplasm. It catalyses the reaction tRNA(Cys) + L-cysteine + ATP = L-cysteinyl-tRNA(Cys) + AMP + diphosphate. This chain is Cysteine--tRNA ligase, found in Nitratidesulfovibrio vulgaris (strain ATCC 29579 / DSM 644 / CCUG 34227 / NCIMB 8303 / VKM B-1760 / Hildenborough) (Desulfovibrio vulgaris).